The following is a 282-amino-acid chain: Uridylate-specific endoribonuclease B (282 aa).

One can recognise an EndoU domain in the interval 4–278; the sequence is GDRELSALIQ…IGTTYPVPVK (275 aa). Active-site residues include H156, H172, and K218.

It belongs to the ENDOU family. Monomer. Requires Mn(2+) as cofactor.

The catalysed reaction is ribonucleotidyl-uridine-RNA = a 5'-end dephospho-uridine-RNA + a 3'-end 2',3'-cyclophospho-ribonucleotide-RNA. In terms of biological role, endoribonuclease that cleaves single-stranded RNAs at 5' of uridylates and releases a product with a 2',3'-cyclic phosphate at the 3'-end. The UU and GU sites are more efficiently cleaved than CU and AU sites. This Danio rerio (Zebrafish) protein is Uridylate-specific endoribonuclease B (endoub).